A 340-amino-acid chain; its full sequence is Cytoskeleton protein RodZ (340 aa).

Topologically, residues 1–111 (MNTEATQEKS…LGKQRKKRDG (111 aa)) are cytoplasmic. The region spanning 19–79 (LRTAREQMGL…RLVHVPEEEL (61 aa)) is the HTH cro/C1-type domain. A DNA-binding region (H-T-H motif) is located at residues 30-49 (QQNVAERLCLKLSTIRDIEE). The helical; Signal-anchor for type II membrane protein transmembrane segment at 112–132 (WLMIFTWLVLFVVLGLTGAWW) threads the bilayer. Residues 133 to 340 (WQNHKAAQDD…QVARLTVGAP (208 aa)) are Periplasmic-facing. The segment at 162-252 (ALSDDNANGG…AAPLPTGSAA (91 aa)) is disordered. Residues 183-201 (ATANNAPSSVTATSDNGTP) are compositionally biased toward polar residues. Residues 202-233 (AATAQSSQVTASNAAPAANAVNDNTPPVAVAP) are compositionally biased toward low complexity.

Belongs to the RodZ family.

It localises to the cell inner membrane. Functionally, cytoskeletal protein that is involved in cell-shape control through regulation of the length of the long axis. The protein is Cytoskeleton protein RodZ of Erwinia tasmaniensis (strain DSM 17950 / CFBP 7177 / CIP 109463 / NCPPB 4357 / Et1/99).